Consider the following 181-residue polypeptide: Caveolin-1 (181 aa).

Topologically, residues 1-107 (MTGGLRDGEK…TKYWCYRLLT (107 aa)) are cytoplasmic. Positions 108–128 (ALVGIPLALIWGIFFAILSFI) form an intramembrane region, helical. Over 129–181 (HIWAVVPCVKSYLIEIHCISRVYSICVHTFCDPLFEAMGKCLGGVRIRTSKEV) the chain is Cytoplasmic. Residues cysteine 136, cysteine 146, and cysteine 159 are each lipidated (S-palmitoyl cysteine).

This sequence belongs to the caveolin family. Homooligomer.

Its subcellular location is the golgi apparatus membrane. It localises to the cell membrane. It is found in the membrane. The protein localises to the caveola. The protein resides in the membrane raft. Functionally, may act as a positive regulator of T-cell coactivation. May act as a scaffolding protein within caveolar membranes. Interacts directly with G-protein alpha subunits and can functionally regulate their activity. This is Caveolin-1 (cav1) from Takifugu rubripes (Japanese pufferfish).